The following is a 474-amino-acid chain: Trigger factor (474 aa).

The PPIase FKBP-type domain maps to 171–258; that stretch reads GDVAVIDFQG…LKELKTRDLP (88 aa). Residues 441–474 form a disordered region; sequence TEVDAASATVETTATETAEEAPEAPKAKKGKKKA. The segment covering 444–456 has biased composition (low complexity); that stretch reads DAASATVETTATE.

It belongs to the FKBP-type PPIase family. Tig subfamily.

Its subcellular location is the cytoplasm. It catalyses the reaction [protein]-peptidylproline (omega=180) = [protein]-peptidylproline (omega=0). Functionally, involved in protein export. Acts as a chaperone by maintaining the newly synthesized protein in an open conformation. Functions as a peptidyl-prolyl cis-trans isomerase. In Synechococcus sp. (strain ATCC 27144 / PCC 6301 / SAUG 1402/1) (Anacystis nidulans), this protein is Trigger factor.